Here is a 519-residue protein sequence, read N- to C-terminus: Transmembrane protein 180 (519 aa).

Residues 1-11 lie on the Extracellular side of the membrane; the sequence is MGLDWPQAWLL. The chain crosses the membrane as a helical span at residues 12-43; sequence GLPIAVVYGSLALFTSILHNVFLLYYVDTFVS. Topologically, residues 44–55 are cytoplasmic; that stretch reads VYKINKVSFWVG. Residues 56-74 form a helical membrane-spanning segment; sequence ETVFLLWNSFNDPLFGWLS. The Extracellular portion of the chain corresponds to 75-100; it reads DRQLLSSQPRSGAGLSSRDVVLTRVR. Residues 101–118 form a helical membrane-spanning segment; that stretch reads ALGWHGPLLALSFLAFWV. Residues 119 to 126 are Cytoplasmic-facing; sequence PWAPAGLQ. Residues 127 to 151 form a helical membrane-spanning segment; that stretch reads FLLCLCLYDGFLTLVDLHHHALLAD. At 152–155 the chain is on the extracellular side; that stretch reads LALS. A helical membrane pass occupies residues 156 to 179; it reads SHDRTHLNFYCSLFSAAGSLSVFA. Over 180–191 the chain is Cytoplasmic; that stretch reads SYAFWNKEDFSS. A helical transmembrane segment spans residues 192–223; sequence FRAFCVVLAAGSGLGFLGTTQLLKRQIEATRR. Over 224–264 the chain is Extracellular; that stretch reads DRGCPGLDLDGGVCEEEPPVGGEEAGNITLGQYLRQLARHQ. Residue N250 is glycosylated (N-linked (GlcNAc...) asparagine). Residues 265–292 traverse the membrane as a helical segment; the sequence is NFLWFVGMDLVQVFHCHFNSNFFPLFLE. At 293–305 the chain is on the cytoplasmic side; that stretch reads HLLSDHISLSTGS. A helical transmembrane segment spans residues 306 to 325; that stretch reads FLLGISYVAPHLNNLYFLPL. The Extracellular segment spans residues 326–330; that stretch reads CRRWG. A helical membrane pass occupies residues 331 to 350; it reads VYAVVRGLFLLKLSLSLLML. Residues 351-358 lie on the Cytoplasmic side of the membrane; that stretch reads LAGPDHPG. A helical membrane pass occupies residues 359–393; sequence LLCFFIASNRVFTEGTCKLLTLVVTDLVDEDLVLN. Topologically, residues 394–402 are extracellular; the sequence is HRKQAASAL. Residues 403 to 429 traverse the membrane as a helical segment; that stretch reads LFGMVALVTKPGQTFAPLLGTWLLCFY. At 430 to 468 the chain is on the cytoplasmic side; the sequence is TGHDLFQQSPMTPVGSVRPWPELPAPAPAPAQAPTLRQG. A helical transmembrane segment spans residues 469-487; sequence CFYLLVFVPITCALLQLFT. The Extracellular portion of the chain corresponds to 488-519; sequence WSQFTLHGRRLRTVKAQRQNLAQIHTLNIKMV.

Its subcellular location is the cell membrane. The protein is Transmembrane protein 180 of Mus musculus (Mouse).